The sequence spans 217 residues: FGFR1 oncogene partner 2 homolog (217 aa).

Coiled-coil stretches lie at residues 6–106 and 163–188; these read TIEK…MSKY and KEQE…TRES. The segment at 194-217 is disordered; that stretch reads KEDASESTSLSGLVTSSDLSLRKS. The segment covering 199–217 has biased composition (polar residues); that stretch reads ESTSLSGLVTSSDLSLRKS.

This sequence belongs to the SIKE family.

It localises to the cytoplasm. The protein is FGFR1 oncogene partner 2 homolog (FGFR1OP2) of Gallus gallus (Chicken).